We begin with the raw amino-acid sequence, 537 residues long: Myosin-binding protein H (537 aa).

A compositionally biased stretch (low complexity) spans 1 to 25 (MTGKTAPAAAKKAPAAKKAPAPASK). The tract at residues 1-138 (MTGKTAPAAA…KPKEEPPSVP (138 aa)) is disordered. Residues 26–69 (KAPEPAPKEKPAPTPKEGHAPTPKEEHAPPPKEEHAPPPKEEHA) are compositionally biased toward basic and acidic residues. Over residues 87–104 (EQPAAPAAEHAPTPTHEA) the composition is skewed to low complexity. Residues 112–124 (PPPAAPAEAPAPE) show a composition bias toward pro residues. In terms of domain architecture, Fibronectin type-III 1 spans 137 to 232 (VPLSLAVEEV…LEQPVLIREI (96 aa)). Residues 236–324 (PRIRLPRQLR…NGAEDKAILD (89 aa)) form the Ig-like C2-type 1 domain. Residues 333 to 428 (PPQNLKLVDV…AAGVAHIKKT (96 aa)) enclose the Fibronectin type-III 2 domain. An Ig-like C2-type 2 domain is found at 444 to 528 (PKFTQPLTDR…VNPLGEASVD (85 aa)).

Belongs to the immunoglobulin superfamily. MyBP family. As to expression, skeletal muscle. Seems to be also expressed in the slow tonic ald muscle. Not detected in gizzard or heart.

Its function is as follows. Binds to myosin; probably involved in interaction with thick myofilaments in the A-band. The sequence is that of Myosin-binding protein H (MYBPH) from Gallus gallus (Chicken).